We begin with the raw amino-acid sequence, 320 residues long: tRNA uridine(34) hydroxylase (320 aa).

The Rhodanese domain occupies 123–217 (EDENTVILDA…YGKDPETKGL (95 aa)). Cys-177 serves as the catalytic Cysteine persulfide intermediate.

It belongs to the TrhO family.

It carries out the reaction uridine(34) in tRNA + AH2 + O2 = 5-hydroxyuridine(34) in tRNA + A + H2O. In terms of biological role, catalyzes oxygen-dependent 5-hydroxyuridine (ho5U) modification at position 34 in tRNAs. The sequence is that of tRNA uridine(34) hydroxylase from Staphylococcus epidermidis (strain ATCC 35984 / DSM 28319 / BCRC 17069 / CCUG 31568 / BM 3577 / RP62A).